The following is an 86-amino-acid chain: Toxin Tpa4 (86 aa).

The first 19 residues, 1 to 19 (MNYFVLIAVACLLTAGTES), serve as a signal peptide directing secretion. An LCN-type CS-alpha/beta domain is found at 21–82 (KDGYPLEYDN…EPIKTSGRCR (62 aa)). Intrachain disulfides connect Cys-31-Cys-81, Cys-35-Cys-57, Cys-43-Cys-64, and Cys-47-Cys-66. The residue at position 83 (Pro-83) is a Proline amide.

The protein belongs to the long (4 C-C) scorpion toxin superfamily. Sodium channel inhibitor family. Alpha subfamily. Expressed by the venom gland.

Its subcellular location is the secreted. Functionally, alpha toxins bind voltage-independently at site-3 of sodium channels (Nav) and inhibit the inactivation of the activated channels, thereby blocking neuronal transmission. The chain is Toxin Tpa4 from Tityus pachyurus (Colombian scorpion).